Reading from the N-terminus, the 357-residue chain is Alanine racemase (357 aa).

The Proton acceptor; specific for D-alanine role is filled by lysine 33. Lysine 33 bears the N6-(pyridoxal phosphate)lysine mark. Arginine 129 provides a ligand contact to substrate. The Proton acceptor; specific for L-alanine role is filled by tyrosine 253. Residue methionine 301 participates in substrate binding.

The protein belongs to the alanine racemase family. Pyridoxal 5'-phosphate is required as a cofactor.

It carries out the reaction L-alanine = D-alanine. It functions in the pathway amino-acid biosynthesis; D-alanine biosynthesis; D-alanine from L-alanine: step 1/1. Its function is as follows. Catalyzes the interconversion of L-alanine and D-alanine. May also act on other amino acids. In Pseudomonas entomophila (strain L48), this protein is Alanine racemase (alr).